Consider the following 300-residue polypeptide: Phosphatidylserine decarboxylase proenzyme (300 aa).

Active-site charge relay system; for autoendoproteolytic cleavage activity residues include D113, H169, and S256. The active-site Schiff-base intermediate with substrate; via pyruvic acid; for decarboxylase activity is S256. S256 is subject to Pyruvic acid (Ser); by autocatalysis.

This sequence belongs to the phosphatidylserine decarboxylase family. PSD-B subfamily. Prokaryotic type II sub-subfamily. As to quaternary structure, heterodimer of a large membrane-associated beta subunit and a small pyruvoyl-containing alpha subunit. Pyruvate is required as a cofactor. In terms of processing, is synthesized initially as an inactive proenzyme. Formation of the active enzyme involves a self-maturation process in which the active site pyruvoyl group is generated from an internal serine residue via an autocatalytic post-translational modification. Two non-identical subunits are generated from the proenzyme in this reaction, and the pyruvate is formed at the N-terminus of the alpha chain, which is derived from the carboxyl end of the proenzyme. The autoendoproteolytic cleavage occurs by a canonical serine protease mechanism, in which the side chain hydroxyl group of the serine supplies its oxygen atom to form the C-terminus of the beta chain, while the remainder of the serine residue undergoes an oxidative deamination to produce ammonia and the pyruvoyl prosthetic group on the alpha chain. During this reaction, the Ser that is part of the protease active site of the proenzyme becomes the pyruvoyl prosthetic group, which constitutes an essential element of the active site of the mature decarboxylase.

Its subcellular location is the cell membrane. The catalysed reaction is a 1,2-diacyl-sn-glycero-3-phospho-L-serine + H(+) = a 1,2-diacyl-sn-glycero-3-phosphoethanolamine + CO2. Its pathway is phospholipid metabolism; phosphatidylethanolamine biosynthesis; phosphatidylethanolamine from CDP-diacylglycerol: step 2/2. In terms of biological role, catalyzes the formation of phosphatidylethanolamine (PtdEtn) from phosphatidylserine (PtdSer). In Ruminiclostridium cellulolyticum (strain ATCC 35319 / DSM 5812 / JCM 6584 / H10) (Clostridium cellulolyticum), this protein is Phosphatidylserine decarboxylase proenzyme.